A 54-amino-acid chain; its full sequence is UPF0391 membrane protein Sde_0270 (54 aa).

The next 2 helical transmembrane spans lie at 6–26 (IVFLLIALVAGLFGFVGIAGV) and 29–49 (GIAKILFFVFLIAFVVSLVIG).

This sequence belongs to the UPF0391 family.

The protein localises to the cell membrane. In Saccharophagus degradans (strain 2-40 / ATCC 43961 / DSM 17024), this protein is UPF0391 membrane protein Sde_0270.